Reading from the N-terminus, the 54-residue chain is Ferredoxin (54 aa).

4Fe-4S ferredoxin-type domains lie at 2-28 (HVIS…EGET) and 29-54 (KYVV…ISAE). Positions 8, 11, 14, 18, 36, 39, 42, and 46 each coordinate [4Fe-4S] cluster.

[4Fe-4S] cluster is required as a cofactor.

Functionally, ferredoxins are iron-sulfur proteins that transfer electrons in a wide variety of metabolic reactions. The polypeptide is Ferredoxin (Megasphaera elsdenii).